The following is a 79-amino-acid chain: CDC42 small effector protein 1 (79 aa).

2 S-palmitoyl cysteine lipidation sites follow: Cys-10 and Cys-11. One can recognise a CRIB domain in the interval 30–43; it reads IGEPMNFVHLTHIG. The segment at 48–79 is disordered; that stretch reads GAGDGLAMTGAVQEQMRSKGNRDRPWSNSRAL. Residues 63-72 are compositionally biased toward basic and acidic residues; sequence MRSKGNRDRP.

This sequence belongs to the CDC42SE/SPEC family. As to quaternary structure, interacts with CDC42 (in GTP-bound form). Interacts weakly with RAC1 and not at all with RHOA.

It localises to the cytoplasm. The protein resides in the cytoskeleton. Its subcellular location is the cell membrane. Functionally, probably involved in the organization of the actin cytoskeleton by acting downstream of CDC42, inducing actin filament assembly. Alters CDC42-induced cell shape changes. In activated T-cells, may play a role in CDC42-mediated F-actin accumulation at the immunological synapse. May play a role in early contractile events in phagocytosis in macrophages. This chain is CDC42 small effector protein 1 (Cdc42se1), found in Rattus norvegicus (Rat).